The sequence spans 180 residues: Iron sulfur cluster assembly protein 1, mitochondrial (180 aa).

It belongs to the NifU family. In terms of assembly, component of the core Fe-S cluster (ISC) assembly machinery. Requires [2Fe-2S] cluster as cofactor.

It localises to the mitochondrion matrix. The protein operates within cofactor biosynthesis; iron-sulfur cluster biosynthesis. Scaffold protein for the de novo synthesis of iron-sulfur (Fe-S) clusters within mitochondria, which is required for maturation of both mitochondrial and cytoplasmic [2Fe-2S] and [4Fe-4S] proteins. First, a [2Fe-2S] cluster is transiently assembled on the scaffold protein ISU1. In a second step, the cluster is released from ISU1, transferred to a glutaredoxin, followed by the formation of mitochondrial [2Fe-2S] proteins, the synthesis of [4Fe-4S] clusters and their target-specific insertion into the recipient apoproteins. Cluster assembly on ISU1 depends on the function of the cysteine desulfurase complex NFS1-ISD11, which serves as the sulfur donor for cluster synthesis, the iron-binding protein frataxin as the putative iron donor, and the electron transfer chain comprised of ferredoxin reductase and ferredoxin, which receive their electrons from NADH. In Kluyveromyces lactis (strain ATCC 8585 / CBS 2359 / DSM 70799 / NBRC 1267 / NRRL Y-1140 / WM37) (Yeast), this protein is Iron sulfur cluster assembly protein 1, mitochondrial (ISU1).